The chain runs to 75 residues: Small ribosomal subunit protein bS18 (75 aa).

Belongs to the bacterial ribosomal protein bS18 family. In terms of assembly, part of the 30S ribosomal subunit. Forms a tight heterodimer with protein bS6.

Binds as a heterodimer with protein bS6 to the central domain of the 16S rRNA, where it helps stabilize the platform of the 30S subunit. In Histophilus somni (strain 129Pt) (Haemophilus somnus), this protein is Small ribosomal subunit protein bS18.